The sequence spans 218 residues: Glycerol-3-phosphate acyltransferase (218 aa).

The next 5 membrane-spanning stretches (helical) occupy residues 4–24, 54–74, 80–100, 107–127, and 130–150; these read IALG…AILI, TAAI…WLAY, PFYL…PIFF, GVAT…GLMM, and WLLT…SALI.

Belongs to the PlsY family. In terms of assembly, probably interacts with PlsX.

The protein resides in the cell inner membrane. The enzyme catalyses an acyl phosphate + sn-glycerol 3-phosphate = a 1-acyl-sn-glycero-3-phosphate + phosphate. The protein operates within lipid metabolism; phospholipid metabolism. In terms of biological role, catalyzes the transfer of an acyl group from acyl-phosphate (acyl-PO(4)) to glycerol-3-phosphate (G3P) to form lysophosphatidic acid (LPA). This enzyme utilizes acyl-phosphate as fatty acyl donor, but not acyl-CoA or acyl-ACP. This is Glycerol-3-phosphate acyltransferase from Photorhabdus laumondii subsp. laumondii (strain DSM 15139 / CIP 105565 / TT01) (Photorhabdus luminescens subsp. laumondii).